Reading from the N-terminus, the 485-residue chain is Amyloid beta A4 precursor protein-binding family B member 1-interacting protein (485 aa).

Residues 84-107 show a composition bias toward polar residues; the sequence is QAQKTSGNQQSVVTQPSTGTNNDF. The disordered stretch occupies residues 84-157; it reads QAQKTSGNQQ…LSQEEQEARA (74 aa). A compositionally biased stretch (pro residues) spans 125–147; that stretch reads LPPPPPAPDLDLPPPPPPPPPEP. Positions 175 to 262 constitute a Ras-associating domain; the sequence is KKLVVKVHMY…KVLFLEKKEK (88 aa). Positions 305–414 constitute a PH domain; it reads VPELEGALYL…WVTGIRIAKY (110 aa).

It belongs to the MRL family.

Its subcellular location is the cell membrane. It localises to the cytoplasm. The protein resides in the cytoskeleton. Its function is as follows. Appears to function in the signal transduction from Ras activation to actin cytoskeletal remodeling. In Gallus gallus (Chicken), this protein is Amyloid beta A4 precursor protein-binding family B member 1-interacting protein (APBB1IP).